A 592-amino-acid polypeptide reads, in one-letter code: Arginine--tRNA ligase (592 aa).

The short motif at 139–149 (ANPNGPLHIGH) is the 'HIGH' region element.

This sequence belongs to the class-I aminoacyl-tRNA synthetase family.

It is found in the cytoplasm. The catalysed reaction is tRNA(Arg) + L-arginine + ATP = L-arginyl-tRNA(Arg) + AMP + diphosphate. The chain is Arginine--tRNA ligase from Methanopyrus kandleri (strain AV19 / DSM 6324 / JCM 9639 / NBRC 100938).